The sequence spans 429 residues: Bifunctional protein GlmU (429 aa).

Residues 1–223 (MKTSILILAA…EDEFMGINDK (223 aa)) form a pyrophosphorylase region. UDP-N-acetyl-alpha-D-glucosamine is bound by residues 8–11 (LAAG), Lys22, and 81–82 (GT). Asp102 serves as a coordination point for Mg(2+). 4 residues coordinate UDP-N-acetyl-alpha-D-glucosamine: Gly135, Glu149, Asn164, and Asn221. Residue Asn221 coordinates Mg(2+). Positions 224–244 (FELSIAENFMQEKIKKYWMQQ) are linker. The segment at 245 to 429 (GVIFHLPQST…KDYYYKKFQK (185 aa)) is N-acetyltransferase. UDP-N-acetyl-alpha-D-glucosamine is bound by residues Arg308 and Lys325. The active-site Proton acceptor is His336. Residues Tyr339 and Asn350 each contribute to the UDP-N-acetyl-alpha-D-glucosamine site. Acetyl-CoA-binding positions include 359–360 (NY), Ser378, Ala396, and Arg413.

In the N-terminal section; belongs to the N-acetylglucosamine-1-phosphate uridyltransferase family. The protein in the C-terminal section; belongs to the transferase hexapeptide repeat family. In terms of assembly, homotrimer. Mg(2+) is required as a cofactor.

The protein localises to the cytoplasm. It carries out the reaction alpha-D-glucosamine 1-phosphate + acetyl-CoA = N-acetyl-alpha-D-glucosamine 1-phosphate + CoA + H(+). The catalysed reaction is N-acetyl-alpha-D-glucosamine 1-phosphate + UTP + H(+) = UDP-N-acetyl-alpha-D-glucosamine + diphosphate. Its pathway is nucleotide-sugar biosynthesis; UDP-N-acetyl-alpha-D-glucosamine biosynthesis; N-acetyl-alpha-D-glucosamine 1-phosphate from alpha-D-glucosamine 6-phosphate (route II): step 2/2. The protein operates within nucleotide-sugar biosynthesis; UDP-N-acetyl-alpha-D-glucosamine biosynthesis; UDP-N-acetyl-alpha-D-glucosamine from N-acetyl-alpha-D-glucosamine 1-phosphate: step 1/1. It functions in the pathway bacterial outer membrane biogenesis; LPS lipid A biosynthesis. Functionally, catalyzes the last two sequential reactions in the de novo biosynthetic pathway for UDP-N-acetylglucosamine (UDP-GlcNAc). The C-terminal domain catalyzes the transfer of acetyl group from acetyl coenzyme A to glucosamine-1-phosphate (GlcN-1-P) to produce N-acetylglucosamine-1-phosphate (GlcNAc-1-P), which is converted into UDP-GlcNAc by the transfer of uridine 5-monophosphate (from uridine 5-triphosphate), a reaction catalyzed by the N-terminal domain. The sequence is that of Bifunctional protein GlmU from Campylobacter jejuni (strain RM1221).